The primary structure comprises 284 residues: Tripartite motif-containing protein 12A (284 aa).

The segment at 15–59 adopts an RING-type zinc-finger fold; the sequence is CPVCLNLMVKPVSADCGHTFCQGCITLYFESIKCDKKVFICPVCR. Residues 91 to 132 form a B box-type zinc finger; the sequence is QKVFNCARHGKKLQLFCRKDMMAICWLCERSQEHRGHKTALI. 4 residues coordinate Zn(2+): cysteine 96, histidine 99, cysteine 118, and histidine 124. Positions 130-234 form a coiled coil; that stretch reads ALIEEVAQEY…QSKLLEDFIS (105 aa).

This sequence belongs to the TRIM/RBCC family. Expressed in embryonic CNS, liver, kidney, olfactory epithelium.

It localises to the cytoplasm. The sequence is that of Tripartite motif-containing protein 12A (Trim12a) from Mus musculus (Mouse).